We begin with the raw amino-acid sequence, 90 residues long: MYYRDQYGNVKYAPEGMGPHHAASSSHHSAQHHHMTKENFSMDDVHSWFEKYKMWFLYALILALIFGVFMWWSKYNHDKKRSLNTASIFY.

The disordered stretch occupies residues 13–34 (APEGMGPHHAASSSHHSAQHHH). Residues 52 to 72 (YKMWFLYALILALIFGVFMWW) traverse the membrane as a helical segment.

It localises to the host membrane. This is an uncharacterized protein from Invertebrate iridescent virus 3 (IIV-3).